Consider the following 790-residue polypeptide: Protein SEY1 (790 aa).

The Cytoplasmic segment spans residues 1 to 692 (MELSEGELSH…KRSIVQHITQ (692 aa)). Positions 55-284 (GNNYHIISVF…VSNELFKPEY (230 aa)) constitute a GB1/RHD3-type G domain. Position 65–72 (65–72 (GSQSTGKS)) interacts with GTP. A helical membrane pass occupies residues 693–713 (IPYYIYLIILVLGWNEFMAII). At 714 to 716 (RNP) the chain is on the lumenal side. The helical transmembrane segment at 717 to 737 (LFFSLSIVLGATVYVLYYLGL) threads the bilayer. The Cytoplasmic portion of the chain corresponds to 738–790 (LRPALVVAQRTMDEVIVMAKTKLREVLIDDHEVTGRQLNKMAGSKENIELDDM).

This sequence belongs to the TRAFAC class dynamin-like GTPase superfamily. GB1/RHD3 GTPase family. RHD3 subfamily.

Its subcellular location is the endoplasmic reticulum membrane. Its function is as follows. Cooperates with the reticulon proteins and tubule-shaping DP1 family proteins to generate and maintain the structure of the tubular endoplasmic reticulum network. Has GTPase activity, which is required for its function in ER organization. The polypeptide is Protein SEY1 (Candida albicans (strain WO-1) (Yeast)).